Here is a 377-residue protein sequence, read N- to C-terminus: Compound eye opsin BCRH1 (377 aa).

Residues 1–53 lie on the Extracellular side of the membrane; it reads MANVTGPQMAFYGSGAATFGYPEGMTVADFVPDRVKHMVLDHWYNYPPVNPMW. N-linked (GlcNAc...) asparagine glycosylation is present at Asn3. A helical membrane pass occupies residues 54 to 78; sequence HYLLGVVYLFLGVISIAGNGLVIYL. The Cytoplasmic portion of the chain corresponds to 79-90; that stretch reads YMKSQALKTPAN. The chain crosses the membrane as a helical span at residues 91–115; it reads MLIVNLALSDLIMLTTNFPPFCYNC. Topologically, residues 116–131 are extracellular; the sequence is FSGGRWMFSGTYCEIY. An intrachain disulfide couples Cys128 to Cys205. Residues 132 to 151 form a helical membrane-spanning segment; sequence AALGAITGVCSIWTLCMISF. The Cytoplasmic portion of the chain corresponds to 152–170; it reads DRYNIICNGFNGPKLTQGK. A helical membrane pass occupies residues 171 to 194; that stretch reads ATFMCGLAWVISVGWSLPPFFGWG. The Extracellular portion of the chain corresponds to 195-218; it reads SYTLEGILDSCSYDYFTRDMNTIT. Residues 219 to 246 traverse the membrane as a helical segment; the sequence is YNICIFIFDFFLPASVIVFSYVFIVKAI. Over 247 to 281 the chain is Cytoplasmic; that stretch reads FAHEAAMRAQAKKMNVTNLRSNEAETQRAEIRIAK. The chain crosses the membrane as a helical span at residues 282–305; the sequence is TALVNVSLWFICWTPYAAITIQGL. Residues 306 to 313 lie on the Extracellular side of the membrane; it reads LGNAEGIT. A helical transmembrane segment spans residues 314-338; it reads PLLTTLPALLAKSCSCYNPFVYAIS. Position 325 is an N6-(retinylidene)lysine (Lys325). At 339-377 the chain is on the cytoplasmic side; the sequence is HPKFRLAITQHLPWFCVHEKDPNDVEENQSSNTQTQEKS.

This sequence belongs to the G-protein coupled receptor 1 family. Opsin subfamily. Phosphorylated on some or all of the serine and threonine residues present in the C-terminal region. In terms of tissue distribution, expressed in all of the seven retinular cells (R1-R7) forming the main rhabdom in each ommatidium.

The protein localises to the membrane. In terms of biological role, visual pigments are the light-absorbing molecules that mediate vision. They consist of an apoprotein, opsin, covalently linked to cis-retinal. This opsin produces visual pigments with maximal absorption in the blue-green region of the spectrum. The sequence is that of Compound eye opsin BCRH1 from Hemigrapsus sanguineus (Asian shore crab).